We begin with the raw amino-acid sequence, 488 residues long: 3-octaprenyl-4-hydroxybenzoate carboxy-lyase (488 aa).

Mn(2+) is bound at residue Asn172. Prenylated FMN contacts are provided by residues 175-177 (IYR), 189-191 (RWL), and 194-195 (RG). Glu238 is a binding site for Mn(2+). The Proton donor role is filled by Asp287.

It belongs to the UbiD family. As to quaternary structure, homohexamer. Prenylated FMN is required as a cofactor. Requires Mn(2+) as cofactor.

Its subcellular location is the cell membrane. The catalysed reaction is a 4-hydroxy-3-(all-trans-polyprenyl)benzoate + H(+) = a 2-(all-trans-polyprenyl)phenol + CO2. It functions in the pathway cofactor biosynthesis; ubiquinone biosynthesis. In terms of biological role, catalyzes the decarboxylation of 3-octaprenyl-4-hydroxy benzoate to 2-octaprenylphenol, an intermediate step in ubiquinone biosynthesis. This is 3-octaprenyl-4-hydroxybenzoate carboxy-lyase from Legionella pneumophila (strain Corby).